The chain runs to 426 residues: MKLQKPKGTQDILPGDAAKWQYVESVARDTFSQYNYGEIRTPMFEHYEVISRSVGDTTDIVTKEMYDFYDKGDRHITLRPEGTAPVVRSYVENKLFAPEVQKPVKLYYIGSMFRYERPQAGRLREFHQIGVECFGAANPATDVETIAMAYHLFEKLGIKDVTLHLNSLGSPESRAAYRQALIDYLTPMRDQLSKDSQRRLDENPLRVLDSKEKEDKLAVEKAPSILDYLDEESQAHFEAVKDMLEALDIPYVIDTNMVRGLDYYNHTIFEFITSVEGSDLTICAGGRYDSLVGYFGGPETPGFGFGLGLERLLMIIEKQGITLPIETEMDVYLAVLGDGANSKALELVQAIRRQGFTAERDYLGRKIKAQFKSADTFKAKLVMTLGESEVEAGKAVIKNNRSRQEVEVSFEDMMTNFANISEQLLS.

It belongs to the class-II aminoacyl-tRNA synthetase family. In terms of assembly, homodimer.

It localises to the cytoplasm. The catalysed reaction is tRNA(His) + L-histidine + ATP = L-histidyl-tRNA(His) + AMP + diphosphate + H(+). The sequence is that of Histidine--tRNA ligase from Streptococcus pyogenes serotype M49 (strain NZ131).